Here is a 519-residue protein sequence, read N- to C-terminus: Sterile alpha motif domain-containing protein 1 (519 aa).

Residues 1 to 11 (MAGPPALPPPE) show a composition bias toward pro residues. 2 disordered regions span residues 1 to 30 (MAGP…ASPH) and 87 to 232 (YKGS…PVSL). A compositionally biased stretch (low complexity) spans 12-29 (TAAAATTAAAASSSAASP). The region spanning 23–99 (SSSAASPHYQ…SISYRNAARV (77 aa)) is the SAMD1-like winged helix (WH) domain. A Phosphothreonine modification is found at Thr-107. Pro residues predominate over residues 108–133 (PPAPPRVPRGGPAAPPPTPAPPPAPV). A compositionally biased stretch (low complexity) spans 134 to 147 (AAPTRAPRAAAATA). The residue at position 150 (Ser-150) is a Phosphoserine. The span at 157-166 (GPRAQRAAPL) shows a compositional bias: low complexity. The span at 167 to 217 (AAPPPAPAAPPAAAPPAGPRRAPPPAVAAREPPAPPQQQQPPPPQPQPPPE) shows a compositional bias: pro residues. The segment covering 218–230 (GGAARAGGPARPV) has biased composition (low complexity). Ser-242 is subject to Phosphoserine. A compositionally biased stretch (basic and acidic residues) spans 261–271 (EAARGRLERTR). Disordered regions lie at residues 261–381 (EAAR…PGSC) and 417–439 (PALP…KPTD). Residues 308–325 (KEEEDEDEDEEEEEEDNV) show a composition bias toward acidic residues. Residues 443 to 511 (WTVMDVVEYF…KVLQQGHFED (69 aa)) enclose the SAM domain.

As to quaternary structure, homopolymerize into a closed pentameric ring. Interacts (via SAM domain) with L3MBTL3 (via SAM domain); the interaction mediates L3MBTL3 binding to chromatin. Interacts (via WH domain) with KDM1A; the interaction modulates KDM1A function. As to expression, expressed to similar levels in different organs. Expressed at higher levels in bone marrow, osteoclasts and spleen. Expressed in vascular smooth muscle cells.

It localises to the nucleus. The protein localises to the chromosome. The protein resides in the secreted. Functionally, unmethylated CpG islands (CGIs)-binding protein which localizes to H3K4me3-decorated CGIs, where it acts as a transcriptional repressor. Tethers L3MBTL3 to chromatin and interacts with the KDM1A histone demethylase complex to modulate H3K4me2 and H3K4me3 levels at CGIs. Plays a role in atherogenesis by binding with LDL on cell surface and promoting LDL oxidation which leads to the formation of foam cell. This chain is Sterile alpha motif domain-containing protein 1, found in Mus musculus (Mouse).